The following is a 547-amino-acid chain: Dihydroxy-acid dehydratase (547 aa).

D78 serves as a coordination point for Mg(2+). A [2Fe-2S] cluster-binding site is contributed by C119. Mg(2+) is bound by residues D120 and K121. An N6-carboxylysine modification is found at K121. [2Fe-2S] cluster is bound at residue C191. E439 is a binding site for Mg(2+). S464 acts as the Proton acceptor in catalysis.

It belongs to the IlvD/Edd family. Homodimer. The cofactor is [2Fe-2S] cluster. Requires Mg(2+) as cofactor.

The enzyme catalyses (2R)-2,3-dihydroxy-3-methylbutanoate = 3-methyl-2-oxobutanoate + H2O. It catalyses the reaction (2R,3R)-2,3-dihydroxy-3-methylpentanoate = (S)-3-methyl-2-oxopentanoate + H2O. The protein operates within amino-acid biosynthesis; L-isoleucine biosynthesis; L-isoleucine from 2-oxobutanoate: step 3/4. It participates in amino-acid biosynthesis; L-valine biosynthesis; L-valine from pyruvate: step 3/4. In terms of biological role, functions in the biosynthesis of branched-chain amino acids. Catalyzes the dehydration of (2R,3R)-2,3-dihydroxy-3-methylpentanoate (2,3-dihydroxy-3-methylvalerate) into 2-oxo-3-methylpentanoate (2-oxo-3-methylvalerate) and of (2R)-2,3-dihydroxy-3-methylbutanoate (2,3-dihydroxyisovalerate) into 2-oxo-3-methylbutanoate (2-oxoisovalerate), the penultimate precursor to L-isoleucine and L-valine, respectively. The polypeptide is Dihydroxy-acid dehydratase (Archaeoglobus fulgidus (strain ATCC 49558 / DSM 4304 / JCM 9628 / NBRC 100126 / VC-16)).